A 290-amino-acid chain; its full sequence is Protein-glutamine deamidase Cif (290 aa).

Residues 1-26 are disordered; it reads MKISPNTISPSQSDPRMSTNVSQRSR. Catalysis depends on residues cysteine 117, histidine 173, and glutamine 193.

The protein belongs to the Cif family.

Its subcellular location is the secreted. It localises to the host nucleus. It carries out the reaction L-glutaminyl-[protein] + H2O = L-glutamyl-[protein] + NH4(+). Its function is as follows. Protein-glutamine deamidase effector that inhibits the host cell cycle and other key cellular processes such as the actin network and programmed-cell death. Acts by mediating the side chain deamidation of 'Gln-40' of host NEDD8, converting it to glutamate, thereby abolishing the activity of cullin-RING-based E3 ubiquitin-protein ligase complexes (CRL complexes). Inactivation of CRL complexes prevents ubiquitination and subsequent degradation of the cyclin-dependent kinase inhibitors CDKN1A/p21 and CDKN1B/p27, leading to G1 and G2 cell cycle arrests in host cells. Also able to catalyze deamidation of 'Gln-40' of host ubiquitin in vitro; however, NEDD8 constitutes the preferred substrate in vivo. This is Protein-glutamine deamidase Cif from Yersinia pseudotuberculosis serotype O:3 (strain YPIII).